The sequence spans 198 residues: ATP-dependent Clp protease proteolytic subunit (198 aa).

S103 (nucleophile) is an active-site residue. Residue H128 is part of the active site.

It belongs to the peptidase S14 family. Fourteen ClpP subunits assemble into 2 heptameric rings which stack back to back to give a disk-like structure with a central cavity, resembling the structure of eukaryotic proteasomes.

The protein resides in the cytoplasm. It catalyses the reaction Hydrolysis of proteins to small peptides in the presence of ATP and magnesium. alpha-casein is the usual test substrate. In the absence of ATP, only oligopeptides shorter than five residues are hydrolyzed (such as succinyl-Leu-Tyr-|-NHMec, and Leu-Tyr-Leu-|-Tyr-Trp, in which cleavage of the -Tyr-|-Leu- and -Tyr-|-Trp bonds also occurs).. Its function is as follows. Cleaves peptides in various proteins in a process that requires ATP hydrolysis. Has a chymotrypsin-like activity. Plays a major role in the degradation of misfolded proteins. This is ATP-dependent Clp protease proteolytic subunit from Ruthia magnifica subsp. Calyptogena magnifica.